A 152-amino-acid chain; its full sequence is Putative aluminum-activated malate transporter 11 (152 aa).

2 consecutive transmembrane segments (helical) span residues 48 to 68 (VIHA…YFME) and 78 to 98 (AIWA…VEGL).

The protein belongs to the aromatic acid exporter (TC 2.A.85) family.

Its subcellular location is the membrane. Malate transporter. The chain is Putative aluminum-activated malate transporter 11 (ALMT11) from Arabidopsis thaliana (Mouse-ear cress).